The following is a 109-amino-acid chain: Large ribosomal subunit protein uL24 (109 aa).

This sequence belongs to the universal ribosomal protein uL24 family. Part of the 50S ribosomal subunit.

In terms of biological role, one of two assembly initiator proteins, it binds directly to the 5'-end of the 23S rRNA, where it nucleates assembly of the 50S subunit. Functionally, one of the proteins that surrounds the polypeptide exit tunnel on the outside of the subunit. The chain is Large ribosomal subunit protein uL24 from Rickettsia massiliae (strain Mtu5).